A 1197-amino-acid polypeptide reads, in one-letter code: Protein timeless homolog (1197 aa).

Positions 1–309 (MDLYMMNCEL…GLHNLQNYSS (309 aa)) are required for homodimerization and for interaction with CRY1 and CHEK1. Serine 281 carries the post-translational modification Phosphoserine. Disordered regions lie at residues 647–674 (STPLPRQQEPEEGDAEEEEEEEEEEELQ) and 943–1002 (RKKL…SAEN). The span at 656-673 (PEEGDAEEEEEEEEEEEL) shows a compositional bias: acidic residues. Residues 810 to 949 (SHRAPLWSPE…KKRRKKLAPS (140 aa)) are DNA-binding domain. Acidic residues predominate over residues 963–985 (QEDPEEEDEHLPEDESEDEESEE). Positions 986 to 999 (GLPSGQGQGSSSLS) are enriched in low complexity. The interval 997 to 1095 (SLSAENLGES…TQLRRVAASL (99 aa)) is interaction with PARP1. A phosphoserine mark is found at serine 1071 and serine 1084. Residues 1079 to 1197 (IPAKLSSTQL…KRFQIEDEDD (119 aa)) form a required for nuclear localization region. Threonine 1086 bears the Phosphothreonine mark. The segment at 1088–1197 (LRRVAASLSQ…KRFQIEDEDD (110 aa)) is disordered. Acidic residues-rich tracts occupy residues 1099 to 1109 (ENEEEREEEPE) and 1143 to 1153 (TEEEATGEEEW). At serine 1165 the chain carries Phosphoserine.

This sequence belongs to the timeless family. As to quaternary structure, monomer. Homodimer or homomultimer. Component of the circadian core oscillator, which includes the CRY proteins, CLOCK or NPAS2, ARTNL/BMAL1 or ARTNL2/BMAL2, CSKN1D and/or CSNK1E, TIMELESS, and the PER proteins. Interacts directly with PER2; the interaction with PER2 is via its second PAS domain. Interacts directly with PER1 and PER3. Interacts with CRY1. Interacts with CRY2. Interacts with CHEK1, ATR and ATRIP. Interacts with CLSPN. Interacts (via N-terminus) with TIPIN. The TIMELESS-TIPIN heterodimer binds preferably to guanine-rich quadruplex-forming (G4) DNA structures. Associates with the MCM2-7 complex. Interacts with DNA polymerases alpha, delta and epsilon. Interacts with DDX11; this interaction increases recruitment of both proteins onto chromatin in response to replication stress induction by hydroxyurea. Interacts with PARP1; interaction is direct and independent of poly-ADP-ribose. As to expression, predominantly and robustly expressed in proliferative organs (spleen, thymus, intestine and testis) compared to those more differentiated such as kidney and liver (at protein level). Expressed in all tissues examined including brain, heart, lung, liver, skeletal muscle, kidney, placenta, pancreas, spleen, thymus and testis. Strongly expressed in the suprachiasmatic nucleus (SCN) and pars tuberalis, moderately in the cingulate cortex, pyrimidal cell layer of the piriform cortex, periventricular part of the caudate putamen, and granular layer of the cerebellum, and weakly in the cerebral cortex, gyrus dentatus, hippocampus and thalamic nuclei. In embryonic kidney, expression is highest in regions of active ureteric bud cell branching.

Its subcellular location is the nucleus. It localises to the chromosome. Its function is as follows. Plays an important role in the control of DNA replication, maintenance of replication fork stability, maintenance of genome stability throughout normal DNA replication, DNA repair and in the regulation of the circadian clock. Required to stabilize replication forks during DNA replication by forming a complex with TIPIN: this complex regulates DNA replication processes under both normal and stress conditions, stabilizes replication forks and influences both CHEK1 phosphorylation and the intra-S phase checkpoint in response to genotoxic stress. During DNA replication, inhibits the CMG complex ATPase activity and activates DNA polymerases catalytic activities, coupling DNA unwinding and DNA synthesis. TIMELESS promotes TIPIN nuclear localization. Plays a role in maintaining processive DNA replication past genomic guanine-rich DNA sequences that form G-quadruplex (G4) structures, possibly together with DDX1. Involved in cell survival after DNA damage or replication stress by promoting DNA repair. In response to double-strand breaks (DSBs), accumulates at DNA damage sites and promotes homologous recombination repair via its interaction with PARP1. May be specifically required for the ATR-CHEK1 pathway in the replication checkpoint induced by hydroxyurea or ultraviolet light. Involved in the determination of period length and in the DNA damage-dependent phase advancing of the circadian clock. Negatively regulates CLOCK|NPAS2-ARTNL/BMAL1|ARTNL2/BMAL2-induced transactivation of PER1 possibly via translocation of PER1 into the nucleus. May also play an important role in epithelial cell morphogenesis and formation of branching tubules. This chain is Protein timeless homolog, found in Mus musculus (Mouse).